The chain runs to 448 residues: Hydroxycinnamoyl-CoA:piscidic acid hydroxycinnamoyltransferase (448 aa).

Residues H153 and D395 each act as proton acceptor in the active site.

It belongs to the plant acyltransferase family. Highly expressed in root and rhizome. Expressed in senescent leaf and callus tissues. Expressed in detached leaf treated for 18 hours with ethephon, methyl jasmonate, salicylic acid or illuminated for 24 hours with UV light. Not expressed in mature leaf. Expressed at low levels in leaves and flowers.

The enzyme catalyses (2R,3S)-piscidate + (E)-4-coumaroyl-CoA = cimicifugate K + CoA. It catalyses the reaction (2R,3S)-piscidate + (E)-caffeoyl-CoA = cimicifugate D + CoA. It carries out the reaction (2R,3S)-piscidate + (E)-sinapoyl-CoA = cimicifugate J + CoA. The catalysed reaction is (2R,3S)-piscidate + (E)-feruloyl-CoA = cimicifugate E + CoA. The protein operates within phenylpropanoid metabolism. In terms of biological role, catalyzes the formation of cimicifugic acids. Uses hydroxycinnamoyl-CoA thioesters as hydroxycinnamoyl donor substrates. Has a strict specificity for piscidic acid as an acceptor substrate as none of the various other acceptors tested including 4-hydroxyphenyllactic acid, malate, spermidine or tetrahydroxyhexanedioic acid are substrates. Donor substrates include 4-coumaroyl-CoA, caffeoyl-CoA, sinapoyl-CoA and feruloyl-CoA. No activity with cinnamoyl-CoA, isoferuloyl-CoA, 3,4-dimethoxycinnamoyl-CoA or 3,4-dihydroxybenzoyl-CoA as donors. In the reverse reaction with fukinolic acid and CoA as substrates, a formation of fukiic acid is evident. Hence, fukiic acid may also serve as an acceptor substrate. Involved in the biosynthesis of cimicifugic and possibly fukinolic acids. The chain is Hydroxycinnamoyl-CoA:piscidic acid hydroxycinnamoyltransferase from Actaea racemosa (Black cohosh).